The primary structure comprises 225 residues: UPF0758 protein BcerKBAB4_4299 (225 aa).

The 123-residue stretch at 103 to 225 (SIRSPEDCAS…FVSLKEKGHI (123 aa)) folds into the MPN domain. The Zn(2+) site is built by histidine 174, histidine 176, and aspartate 187. The JAMM motif signature appears at 174 to 187 (HNHPSGDPAPSRED).

It belongs to the UPF0758 family.

In Bacillus mycoides (strain KBAB4) (Bacillus weihenstephanensis), this protein is UPF0758 protein BcerKBAB4_4299.